The following is a 137-amino-acid chain: Putative pre-16S rRNA nuclease (137 aa).

Belongs to the YqgF nuclease family.

The protein localises to the cytoplasm. Functionally, could be a nuclease involved in processing of the 5'-end of pre-16S rRNA. The chain is Putative pre-16S rRNA nuclease from Bacillus cereus (strain B4264).